The following is a 1313-amino-acid chain: Target of rapamycin complex 1 subunit mip1 (1313 aa).

A disordered region spans residues 1-35 (MNDRISEVSGSSRARRSVLSYGTTETGSDRYTENS). Phosphoserine occurs at positions 834, 837, and 882. WD repeat units lie at residues 986 to 1029 (TFNN…NSFK), 1033 to 1074 (SATT…KVEL), 1087 to 1126 (GDRN…CYAN), 1130 to 1170 (RSSN…RDSL), 1176 to 1216 (EHSS…SLQT), 1219 to 1259 (TDNS…NTFR), and 1268 to 1308 (PKPS…IHTD).

The protein belongs to the WD repeat RAPTOR family. In terms of assembly, the target of rapamycin complex 1 (TORC1) is composed of at least mip1, pop3/wat1, tco89, toc1 and tor2.

The protein localises to the cytoplasm. Component of TORC1, which regulates multiple cellular processes to control cell growth in response to environmental signals. Tor2 is essential for growth. Nutrient limitation and environmental stress signals cause inactivation of TORC1. Active TORC1 positively controls cell growth and ribosome biogenesis by regulating ribosomal protein gene expression. TORC1 negatively controls G1 cell-cycle arrest, sexual development and amino acid uptake. Represses mating, meiosis and sporulation efficiency by interfering with the functions of the transcription factor ste11 and the meiosis-promoting RNA-binding protein mei2. The polypeptide is Target of rapamycin complex 1 subunit mip1 (Schizosaccharomyces pombe (strain 972 / ATCC 24843) (Fission yeast)).